The primary structure comprises 766 residues: DNA ligase (766 aa).

Positions 1–30 are disordered; it reads MSTVNAKGAKPATDANGQSLNPEEPSEALR. NAD(+) contacts are provided by residues 57-61, 106-107, and Glu141; these read DAEYD and SL. Lys143 serves as the catalytic N6-AMP-lysine intermediate. The NAD(+) site is built by Arg164, Glu201, Lys317, and Lys341. Zn(2+) is bound by residues Cys435, Cys438, Cys454, and Cys460. A BRCT domain is found at 669-758; sequence STPRTLEGVT…PEAFGDRADA (90 aa). The interval 747-766 is disordered; it reads QGPEAFGDRADAADQPAAGE.

Belongs to the NAD-dependent DNA ligase family. LigA subfamily. Requires Mg(2+) as cofactor. Mn(2+) is required as a cofactor.

The catalysed reaction is NAD(+) + (deoxyribonucleotide)n-3'-hydroxyl + 5'-phospho-(deoxyribonucleotide)m = (deoxyribonucleotide)n+m + AMP + beta-nicotinamide D-nucleotide.. DNA ligase that catalyzes the formation of phosphodiester linkages between 5'-phosphoryl and 3'-hydroxyl groups in double-stranded DNA using NAD as a coenzyme and as the energy source for the reaction. It is essential for DNA replication and repair of damaged DNA. In Kocuria rhizophila (strain ATCC 9341 / DSM 348 / NBRC 103217 / DC2201), this protein is DNA ligase.